The chain runs to 105 residues: MNIHISALIQKMEEELKKAKTAERDEELKRYVAVVRSLCDVVLDQPENASAPRIQPSVTPSPAAPPSTDQLMMEKMMGSAGLNKYRKQEKEKQEEDGNGESLFDF.

The segment at 47-105 (ENASAPRIQPSVTPSPAAPPSTDQLMMEKMMGSAGLNKYRKQEKEKQEEDGNGESLFDF) is disordered. Positions 86-95 (RKQEKEKQEE) are enriched in basic and acidic residues.

This is an uncharacterized protein from Bacillus subtilis (strain 168).